The chain runs to 921 residues: MEYKDTLLMPKTDFPMRGNLPNKEPEWQAKWEEEKLYEKIQEKNAGRPTYILHDGPPYANGELHMGHALNKTIKDIIVRYKSMAGFSSPYVPGWDTHGLPIETAIAKKGVKRKEMSIAEFRKLCAEYAMKQVDGQRTGFKRLGINGDWENPYITLLPEYEAEQIKVFGEMAKKGYIYKGKKPVYWSPSSESALAEAEIEYQDKTSASIFVAFKVTDGKGVLDEGTNIVIWTTTPWTIPANMGITVNPDLDYVVIESAGEKYVVAEALLPSLREKLGFEDATVVKTVRGSELDRVVTKHPFYDRDSLVMNGEHATAEAGTGAVHTAPGHGEDDFLIGKKYDLEILAPLDDRGVFTEEAPGFEGVFYDTANKMVTEKLEEVGALLKMEFITHSYPHDWRTKKPVIFRATAQWFASIDAFRDDLLAAVKGVNWTPAWGETRLFNMVRDRGDWVISRQRAWGVPLPIFYAENGEAIITDETINHISELFREHGSNVWFERDVKDLLPAGFTHPGSPNGEFTKETDIMDVWFDSGSSHQAVLNARPELSRPADLYMEGSDQYRGWFNSSLTTAVAITGEAPYRNVLSHGFALDGEGRKMSKSLGNTLLPGKVIKQLGADIVRLWVASVDYQADVRVSDEILKQVSEVYRKIRNTMRFLLGNINDFNPTTNTVSYENLREVDKYMLIKLNDLVKNVKDSYEAFEFSTIYHQINNFCTVELSQFYMDFAKDVVYIEAADSHDRRAMQTVFYEAVVTLTKLLAPILPHTTEEVWNSLIGEGAESIHLQDLPDVKVLANSEEITAKWDAFMQIRDNVQKALEFARNEKLIGKSMLAKVTLYVDGEAKTLFDSLEGDFAQLFIVSDFELVEGLENAPESAFKSNQVAVQITVAEGETCERCRVVKKDVGVNPKHPTLCGRCADIVVKHYEA.

A 'HIGH' region motif is present at residues 57 to 67 (PYANGELHMGH). L-isoleucyl-5'-AMP is bound at residue glutamate 552. The 'KMSKS' region signature appears at 593–597 (KMSKS). An ATP-binding site is contributed by lysine 596. Zn(2+) is bound by residues cysteine 888, cysteine 891, cysteine 908, and cysteine 911.

This sequence belongs to the class-I aminoacyl-tRNA synthetase family. IleS type 1 subfamily. Monomer. It depends on Zn(2+) as a cofactor.

The protein localises to the cytoplasm. It carries out the reaction tRNA(Ile) + L-isoleucine + ATP = L-isoleucyl-tRNA(Ile) + AMP + diphosphate. Its function is as follows. Catalyzes the attachment of isoleucine to tRNA(Ile). As IleRS can inadvertently accommodate and process structurally similar amino acids such as valine, to avoid such errors it has two additional distinct tRNA(Ile)-dependent editing activities. One activity is designated as 'pretransfer' editing and involves the hydrolysis of activated Val-AMP. The other activity is designated 'posttransfer' editing and involves deacylation of mischarged Val-tRNA(Ile). The sequence is that of Isoleucine--tRNA ligase from Listeria monocytogenes serovar 1/2a (strain ATCC BAA-679 / EGD-e).